We begin with the raw amino-acid sequence, 595 residues long: Inactive serine/threonine-protein kinase PLK5 (595 aa).

Residues 27–279 (YRRGKLIGKG…LDHLLQDDFF (253 aa)) form the Protein kinase domain. ATP contacts are provided by residues 33 to 41 (IGKGAFSRC) and K56. D150 functions as the Proton acceptor in the catalytic mechanism. The tract at residues 326–350 (FTSKEASGPGEEGTEPDHMEAGNEE) is disordered. The segment covering 340-350 (EPDHMEAGNEE) has biased composition (basic and acidic residues). POLO box domains follow at residues 413-491 (WAPK…YMQR) and 509-595 (DISL…LQSV).

This sequence belongs to the protein kinase superfamily. Ser/Thr protein kinase family. CDC5/Polo subfamily. As to expression, expressed in the cerebellum, eye and brain cortex (at protein level). Expressed in highly differentiated tissues, such as brain, eyes and ovary. Not detectable in proliferating tissues, such as the colon, spleen and placenta.

It localises to the nucleus. The protein localises to the nucleolus. Its subcellular location is the cytoplasm. Functionally, inactive serine/threonine-protein kinase that plays a role in cell cycle progression and neuronal differentiation. In Mus musculus (Mouse), this protein is Inactive serine/threonine-protein kinase PLK5.